The primary structure comprises 553 residues: uncharacterized protein (553 aa).

The first 28 residues, 1–28, serve as a signal peptide directing secretion; that stretch reads MRYARHASRYSLFTLAVSAALLPGAGWA.

This is an uncharacterized protein from Pseudomonas aeruginosa (strain ATCC 15692 / DSM 22644 / CIP 104116 / JCM 14847 / LMG 12228 / 1C / PRS 101 / PAO1).